The primary structure comprises 200 residues: Probable GTP-binding protein EngB (200 aa).

In terms of domain architecture, EngB-type G spans threonine 22 to alanine 194. Residues glycine 30 to serine 37, glycine 57 to leucine 61, aspartate 75 to glycine 78, threonine 142 to aspartate 145, and phenylalanine 173 to alanine 175 each bind GTP. The Mg(2+) site is built by serine 37 and threonine 59.

The protein belongs to the TRAFAC class TrmE-Era-EngA-EngB-Septin-like GTPase superfamily. EngB GTPase family. It depends on Mg(2+) as a cofactor.

In terms of biological role, necessary for normal cell division and for the maintenance of normal septation. The chain is Probable GTP-binding protein EngB from Pelobacter propionicus (strain DSM 2379 / NBRC 103807 / OttBd1).